The sequence spans 197 residues: MITPNVRRFLNLLCGEYSNQQQAFDNPPLYAHIFLRYRSLPQLKPGSILLEQTYAVDPKNPYRLRMIRAEEQPSGAIKLWNHTFQDPARFAGATFDPALRRSIQTPDLISLDQCHYQVVEQSDGYHGAMEPGCQCIVRRDGKDTVLVSSFHLQGESLQTLDRGHDPITNERCWGSVAGPFRFKRTQSWAADLASAWL.

It belongs to the CpcT/CpeT biliprotein lyase family.

In terms of biological role, covalently attaches a chromophore to Cys residue(s) of phycobiliproteins. The polypeptide is Chromophore lyase CpcT/CpeT (Synechococcus sp. (strain WH8103)).